The following is a 556-amino-acid chain: Serine beta-lactamase-like protein LACTB, mitochondrial (556 aa).

The transit peptide at 1-117 (MYRLLSAVMA…RAIDSSRDLL (117 aa)) directs the protein to the mitochondrion. Residue Ser166 is the Acyl-ester intermediate of the active site. Over residues 249–282 (ESDQEKELKEKGGKSNEKNDFAKAKVEQDNETKG) the composition is skewed to basic and acidic residues. The interval 249–290 (ESDQEKELKEKGGKSNEKNDFAKAKVEQDNETKGRNSKPCKK) is disordered. Residues Lys290 and Lys291 each carry the N6-succinyllysine modification. Lys304 and Lys349 each carry N6-acetyllysine.

The protein belongs to the peptidase S12 family.

The protein resides in the mitochondrion. Its function is as follows. Mitochondrial serine protease that acts as a regulator of mitochondrial lipid metabolism. Acts by decreasing protein levels of PISD, a mitochondrial enzyme that converts phosphatidylserine (PtdSer) to phosphatidylethanolamine (PtdEtn), thereby affecting mitochondrial lipid metabolism. It is unclear whether it acts directly by mediating proteolysis of PISD or by mediating proteolysis of another lipid metabolism protein. In Bos taurus (Bovine), this protein is Serine beta-lactamase-like protein LACTB, mitochondrial.